The chain runs to 310 residues: tRNA dimethylallyltransferase 2 (310 aa).

15-22 is an ATP binding site; sequence GPTASGKT. Position 17 to 22 (17 to 22) interacts with substrate; it reads TASGKT. The tract at residues 40–43 is interaction with substrate tRNA; it reads DSMQ.

This sequence belongs to the IPP transferase family. As to quaternary structure, monomer. Requires Mg(2+) as cofactor.

It carries out the reaction adenosine(37) in tRNA + dimethylallyl diphosphate = N(6)-dimethylallyladenosine(37) in tRNA + diphosphate. In terms of biological role, catalyzes the transfer of a dimethylallyl group onto the adenine at position 37 in tRNAs that read codons beginning with uridine, leading to the formation of N6-(dimethylallyl)adenosine (i(6)A). This chain is tRNA dimethylallyltransferase 2, found in Geotalea uraniireducens (strain Rf4) (Geobacter uraniireducens).